The chain runs to 64 residues: Insect toxin OsI1 (64 aa).

Residues 1 to 61 form the LCN-type CS-alpha/beta domain; sequence DGYPKQKDGC…MWKYETNTCG (61 aa). Cystine bridges form between Cys-10–Cys-60, Cys-14–Cys-35, Cys-21–Cys-42, and Cys-25–Cys-44. Gly-61 carries the post-translational modification Glycine amide.

This sequence belongs to the long (4 C-C) scorpion toxin superfamily. Sodium channel inhibitor family. Beta subfamily. In terms of tissue distribution, expressed by the venom gland.

It localises to the secreted. In terms of biological role, depressant insect beta-toxins cause a transient contraction paralysis followed by a slow flaccid paralysis. They bind voltage-independently at site-4 of sodium channels (Nav) and shift the voltage of activation toward more negative potentials thereby affecting sodium channel activation and promoting spontaneous and repetitive firing. This toxin is active only on insects. The protein is Insect toxin OsI1 of Orthochirus scrobiculosus (Central Asian scorpion).